The sequence spans 341 residues: MKALSKLKAEEGIWMTDVPEPEVGHNDLLIKIRKTAICGTDVHIYNWDEWSQKTIPVPMVVGHEYVGEVVGIGQEVKGFKIGDRVSGEGHITCGHCRNCRGGRTHLCRNTVGVGVNRPGCFAEYLVIPAFNAFKIPDNISDDLASIFDPFGNAVHTALSFDLVGEDVLVSGAGPIGIMAAAVAKHVGARNVVITDVNEYRLSLARKMGVTRAVDVSKENLNDVMAELGMTEGFDVGLEMSGAPPAFRSMLDTMNHGGRIAMLGIPPSDMSIDWNKVIFKGLFIKGIYGREMFETWYKMAALIQSGLDLTPIITHHFGIDDFQKGFDAMRSGQSGKVILSWD.

Zn(2+) is bound at residue C38. Catalysis depends on charge relay system residues T40 and H43. Zn(2+)-binding residues include H63, E64, C93, C96, C99, and C107. NAD(+) is bound by residues I175, D195, R200, 262–264 (LGI), and 286–287 (IY).

It belongs to the zinc-containing alcohol dehydrogenase family. Homotetramer. Zn(2+) is required as a cofactor.

Its subcellular location is the cytoplasm. It carries out the reaction L-threonine + NAD(+) = (2S)-2-amino-3-oxobutanoate + NADH + H(+). It participates in amino-acid degradation; L-threonine degradation via oxydo-reductase pathway; glycine from L-threonine: step 1/2. Catalyzes the NAD(+)-dependent oxidation of L-threonine to 2-amino-3-ketobutyrate. The sequence is that of L-threonine 3-dehydrogenase from Enterobacter sp. (strain 638).